A 233-amino-acid polypeptide reads, in one-letter code: Putative quercetin 2,3-dioxygenase PM1685 (233 aa).

A divalent metal cation contacts are provided by His59, His61, His103, and Glu105.

Belongs to the pirin family. It depends on a divalent metal cation as a cofactor.

The enzyme catalyses quercetin + O2 = 2-(3,4-dihydroxybenzoyloxy)-4,6-dihydroxybenzoate + CO. It participates in flavonoid metabolism; quercetin degradation. Functionally, putative quercetin 2,3-dioxygenase. The polypeptide is Putative quercetin 2,3-dioxygenase PM1685 (Pasteurella multocida (strain Pm70)).